Here is a 112-residue protein sequence, read N- to C-terminus: Protein BEX5 (112 aa).

Composition is skewed to basic and acidic residues over residues 1 to 12 (MEKDPKERREEE) and 30 to 51 (PKPR…REDM). The disordered stretch occupies residues 1–56 (MEKDPKERREEEQAPVQNEEACPMGGGEGPKPRENVRGDWDPPAQDFREDMPNGLV). The interval 101-105 (HHDHH) is his cluster. Cys109 provides a ligand contact to Zn(2+).

This sequence belongs to the BEX family. Ubiquitinated. Degraded by the proteasome.

Its subcellular location is the cytoplasm. The protein is Protein BEX5 (BEX5) of Bos taurus (Bovine).